Reading from the N-terminus, the 130-residue chain is Small ribosomal subunit protein uS9 (130 aa).

The protein belongs to the universal ribosomal protein uS9 family.

The sequence is that of Small ribosomal subunit protein uS9 from Burkholderia pseudomallei (strain K96243).